A 455-amino-acid chain; its full sequence is Ribulose bisphosphate carboxylase large chain (455 aa).

N6,N6,N6-trimethyllysine is present on Lys5. Asn114 and Thr164 together coordinate substrate. Lys166 acts as the Proton acceptor in catalysis. Substrate is bound at residue Lys168. Mg(2+)-binding residues include Lys192, Asp194, and Glu195. Lys192 is subject to N6-carboxylysine. Catalysis depends on His285, which acts as the Proton acceptor. Residues Arg286, His318, and Ser370 each contribute to the substrate site.

The protein belongs to the RuBisCO large chain family. Type I subfamily. Heterohexadecamer of 8 large chains and 8 small chains; disulfide-linked. The disulfide link is formed within the large subunit homodimers. Requires Mg(2+) as cofactor. Post-translationally, the disulfide bond which can form in the large chain dimeric partners within the hexadecamer appears to be associated with oxidative stress and protein turnover.

The protein resides in the plastid. It is found in the chloroplast. It catalyses the reaction 2 (2R)-3-phosphoglycerate + 2 H(+) = D-ribulose 1,5-bisphosphate + CO2 + H2O. It carries out the reaction D-ribulose 1,5-bisphosphate + O2 = 2-phosphoglycolate + (2R)-3-phosphoglycerate + 2 H(+). Functionally, ruBisCO catalyzes two reactions: the carboxylation of D-ribulose 1,5-bisphosphate, the primary event in carbon dioxide fixation, as well as the oxidative fragmentation of the pentose substrate in the photorespiration process. Both reactions occur simultaneously and in competition at the same active site. This Lupinus digitatus (Lupine) protein is Ribulose bisphosphate carboxylase large chain.